The following is a 201-amino-acid chain: Ras-related protein Rab-10 (201 aa).

Residue 16-23 (GDSGVGKT) participates in GTP binding. Positions 38 to 46 (FISTIGIDF) match the Effector region motif. Residues 64-68 (DTAGQ), 122-125 (NKCD), and 152-154 (SAK) each bind GTP. The segment at 175 to 201 (PDSTDEQSRDTVNPVQPQRQSSSGGCC) is disordered. Over residues 184 to 201 (DTVNPVQPQRQSSSGGCC) the composition is skewed to polar residues. 2 S-geranylgeranyl cysteine lipidation sites follow: Cys-200 and Cys-201.

This sequence belongs to the small GTPase superfamily. Rab family. As to quaternary structure, interacts (GTP-bound form) with ehbp-1 (via C-terminal coiled coil). Interacts (GTP-bound form) with cnt-1 (via C-terminal ankyrin repeat). Interacts (GTP-bound form) with rab-5 GAP, tbc-2 (via putative coiled coil domain). Interacts (GTP-bound form) with amph-1. As to expression, almost ubiquitously expressed. Expressed in intestine, hypodermis, seam cells, body-wall muscles, many neurons, oviduct sheath cell, spermatheca, coelomocytes and pharyngeal and nerve ring.

The protein resides in the early endosome membrane. It localises to the late endosome membrane. The protein localises to the golgi apparatus membrane. Its subcellular location is the endosome membrane. It carries out the reaction GTP + H2O = GDP + phosphate + H(+). Rab activation is generally mediated by a guanine exchange factor (GEF), while inactivation through hydrolysis of bound GTP is catalyzed by a GTPase activating protein (GAP). Tbc-4 is a likely GAP of this rab. Denn-4 is a putative GEF of this rab. Functionally, the small GTPases Rab are key regulators of intracellular membrane trafficking, from the formation of transport vesicles to their fusion with membranes. Rabs cycle between an inactive GDP-bound form and an active GTP-bound form that is able to recruit to membranes different set of downstream effectors directly responsible for vesicle formation, movement, tethering and fusion. Required for basolateral endocytic recycling, the return of macromolecules and fluid from endosomes to the plasma membrane, in polarized epithelial cells of the intestine upstream of rme-1. Involved in the formation of the endosomal tubular network that is required for basolateral recycling of clathrin-independent endocytic cargo such as daf-4 in the intestine. Required for the recruitment of cnt-1 effector to endosomal membranes in the intestinal epithelium, which is important for the regulation of levels of endosomal phosphatidylinositol-4,5-bisphosphate, a key phosphoinositide in membrane traffic, and for the recruitment of endosomal membrane-bending proteins, rme-1 and sdpn-1. Recruits the rab-5 GTPase-activating protein tbc-2 to endosomes where it then inactivates rab-5 resulting in removal of rab-5 from membranes, which is necessary for cargo transport from early endosomes to recycling endosomes in the basolateral intestine. Regulates recycling of synaptic membrane AMPA glutamate receptor, glr-1, from intracellular endosomal compartments back to synapses in a cholesterol-dependent endocytosis pathway functioning after clathrin-independent endocytosis in command interneurons. Regulates neuropeptide release from dense core vesicles (DCVs) of cholinergic motoneurons in cooperation with rab-5. They reciprocally recruit each other's inactivating GAP molecule leading to local exclusion of one or the other rab protein at the Golgi-endosomal interphase at an essential stage during DCV sorting. Regulates membrane trafficking of membranes and dendrite proteins from the Golgi and/or endosomal compartments to plasma membrane during dendrite morphogenesis together with the exocyst complex in the multi-dendritic PVD sensory neurons acting in a cell-autonomous manner and requiring its GTPase activity. Functions cell-autonomously together with the exocyst complex to regulate dendrite morphogenesis and anterior-posterior patterning of the PVD neurons dendritic arbor by balancing the anterograde and retrograde transport via molecular motors unc-116 (kinesin heavy chain) and dhc-1 (dynein heavy chain) to appropriately transport branching factors, such as dma-1, to the specific subcellular regions of the developing dendrite in its GTPase activity-dependent manner. This Caenorhabditis elegans protein is Ras-related protein Rab-10.